The following is a 345-amino-acid chain: Myb/SANT-like DNA-binding domain-containing protein 4 (345 aa).

The Myb-like domain occupies 4 to 77 (LKRKRKSNFS…EVKRRYLDWR (74 aa)). Lys-9 is covalently cross-linked (Glycyl lysine isopeptide (Lys-Gly) (interchain with G-Cter in SUMO2)). Ser-106 is subject to Phosphoserine. Residues Lys-114 and Lys-142 each participate in a glycyl lysine isopeptide (Lys-Gly) (interchain with G-Cter in SUMO2) cross-link. The disordered stretch occupies residues 139–175 (TEVKVEEEERDPQSPEFEIEEEEEMLSSVIPDSRREN). Thr-188 is modified (phosphothreonine). The stretch at 202-344 (HLLMNIEKQK…RLRIQKEGHL (143 aa)) forms a coiled coil. Residues Lys-237, Lys-254, and Lys-273 each participate in a glycyl lysine isopeptide (Lys-Gly) (interchain with G-Cter in SUMO2) cross-link.

In Mus musculus (Mouse), this protein is Myb/SANT-like DNA-binding domain-containing protein 4 (Msantd4).